The chain runs to 465 residues: Trigger factor (465 aa).

One can recognise a PPIase FKBP-type domain in the interval G163–A248. A disordered region spans residues E431–K465. A compositionally biased stretch (basic and acidic residues) spans E443–K465.

Belongs to the FKBP-type PPIase family. Tig subfamily.

It localises to the cytoplasm. The enzyme catalyses [protein]-peptidylproline (omega=180) = [protein]-peptidylproline (omega=0). Involved in protein export. Acts as a chaperone by maintaining the newly synthesized protein in an open conformation. Functions as a peptidyl-prolyl cis-trans isomerase. This Mesomycoplasma hyopneumoniae (strain 232) (Mycoplasma hyopneumoniae) protein is Trigger factor.